Here is a 298-residue protein sequence, read N- to C-terminus: Aspartate carbamoyltransferase catalytic subunit (298 aa).

Residues Arg54 and Thr55 each coordinate carbamoyl phosphate. Lys82 is an L-aspartate binding site. Carbamoyl phosphate-binding residues include Arg104, His132, and Gln135. Residues Arg165 and Arg218 each coordinate L-aspartate. Carbamoyl phosphate contacts are provided by Gly260 and Pro261.

It belongs to the aspartate/ornithine carbamoyltransferase superfamily. ATCase family. Heterododecamer (2C3:3R2) of six catalytic PyrB chains organized as two trimers (C3), and six regulatory PyrI chains organized as three dimers (R2).

The enzyme catalyses carbamoyl phosphate + L-aspartate = N-carbamoyl-L-aspartate + phosphate + H(+). It functions in the pathway pyrimidine metabolism; UMP biosynthesis via de novo pathway; (S)-dihydroorotate from bicarbonate: step 2/3. In terms of biological role, catalyzes the condensation of carbamoyl phosphate and aspartate to form carbamoyl aspartate and inorganic phosphate, the committed step in the de novo pyrimidine nucleotide biosynthesis pathway. This chain is Aspartate carbamoyltransferase catalytic subunit, found in Wolbachia sp. subsp. Brugia malayi (strain TRS).